The sequence spans 215 residues: NADH-quinone oxidoreductase subunit C (215 aa).

This sequence belongs to the complex I 30 kDa subunit family. In terms of assembly, NDH-1 is composed of 14 different subunits. Subunits NuoB, C, D, E, F, and G constitute the peripheral sector of the complex.

It localises to the cell inner membrane. The catalysed reaction is a quinone + NADH + 5 H(+)(in) = a quinol + NAD(+) + 4 H(+)(out). In terms of biological role, NDH-1 shuttles electrons from NADH, via FMN and iron-sulfur (Fe-S) centers, to quinones in the respiratory chain. The immediate electron acceptor for the enzyme in this species is believed to be ubiquinone. Couples the redox reaction to proton translocation (for every two electrons transferred, four hydrogen ions are translocated across the cytoplasmic membrane), and thus conserves the redox energy in a proton gradient. This is NADH-quinone oxidoreductase subunit C from Dinoroseobacter shibae (strain DSM 16493 / NCIMB 14021 / DFL 12).